The sequence spans 113 residues: U11-theraphotoxin-Hhn1a (113 aa).

The N-terminal stretch at 1–21 is a signal peptide; the sequence is MNTVRVTFLLVFVLAVSLGQA. The propeptide occupies 22-74; that stretch reads DKDENRMEVQEKTEQGKSYLDFAENLLLQKLEELEAKLLEEDSEESRNSRQKR. The segment at 61 to 83 is disordered; that stretch reads EEDSEESRNSRQKRCIGEGVPCD. Cystine bridges form between Cys-75-Cys-90, Cys-82-Cys-95, and Cys-89-Cys-110.

Belongs to the neurotoxin 14 (magi-1) family. 01 (HNTX-16) subfamily. In terms of tissue distribution, expressed by the venom gland.

Its subcellular location is the secreted. In terms of biological role, probable ion channel inhibitor. This Cyriopagopus hainanus (Chinese bird spider) protein is U11-theraphotoxin-Hhn1a.